A 453-amino-acid chain; its full sequence is GTPase Der (453 aa).

2 consecutive EngA-type G domains span residues 3-167 and 187-360; these read PIIV…ISEK and IKVA…EDSK. GTP-binding positions include 9-16, 57-61, 119-122, 193-200, 240-244, and 305-308; these read GRTNVGKS, DTAGL, NKID, GRPNVGKS, DTAGA, and NKCD. The KH-like domain maps to 361–445; sequence RKISTSTLIR…PIQIQFKDNE (85 aa).

The protein belongs to the TRAFAC class TrmE-Era-EngA-EngB-Septin-like GTPase superfamily. EngA (Der) GTPase family. In terms of assembly, associates with the 50S ribosomal subunit.

Functionally, GTPase that plays an essential role in the late steps of ribosome biogenesis. This chain is GTPase Der, found in Buchnera aphidicola subsp. Acyrthosiphon pisum (strain Tuc7).